Reading from the N-terminus, the 257-residue chain is 4-hydroxy-tetrahydrodipicolinate reductase (257 aa).

An NAD(+)-binding site is contributed by 7–12; sequence GCLGRM. R34 contributes to the NADP(+) binding site. NAD(+) contacts are provided by residues 96 to 98 and 117 to 120; these read GTT and SCNM. Catalysis depends on H149, which acts as the Proton donor/acceptor. H150 is a (S)-2,3,4,5-tetrahydrodipicolinate binding site. K153 serves as the catalytic Proton donor. Position 159–160 (159–160) interacts with (S)-2,3,4,5-tetrahydrodipicolinate; the sequence is GT.

This sequence belongs to the DapB family.

Its subcellular location is the cytoplasm. It carries out the reaction (S)-2,3,4,5-tetrahydrodipicolinate + NAD(+) + H2O = (2S,4S)-4-hydroxy-2,3,4,5-tetrahydrodipicolinate + NADH + H(+). The enzyme catalyses (S)-2,3,4,5-tetrahydrodipicolinate + NADP(+) + H2O = (2S,4S)-4-hydroxy-2,3,4,5-tetrahydrodipicolinate + NADPH + H(+). It participates in amino-acid biosynthesis; L-lysine biosynthesis via DAP pathway; (S)-tetrahydrodipicolinate from L-aspartate: step 4/4. Functionally, catalyzes the conversion of 4-hydroxy-tetrahydrodipicolinate (HTPA) to tetrahydrodipicolinate. This chain is 4-hydroxy-tetrahydrodipicolinate reductase, found in Anaplasma marginale (strain St. Maries).